A 252-amino-acid chain; its full sequence is 1-(5-phosphoribosyl)-5-[(5-phosphoribosylamino)methylideneamino] imidazole-4-carboxamide isomerase (252 aa).

Residue Asp8 is the Proton acceptor of the active site. Asp129 serves as the catalytic Proton donor.

It belongs to the HisA/HisF family.

Its subcellular location is the cytoplasm. It carries out the reaction 1-(5-phospho-beta-D-ribosyl)-5-[(5-phospho-beta-D-ribosylamino)methylideneamino]imidazole-4-carboxamide = 5-[(5-phospho-1-deoxy-D-ribulos-1-ylimino)methylamino]-1-(5-phospho-beta-D-ribosyl)imidazole-4-carboxamide. It participates in amino-acid biosynthesis; L-histidine biosynthesis; L-histidine from 5-phospho-alpha-D-ribose 1-diphosphate: step 4/9. This Synechococcus sp. (strain RCC307) protein is 1-(5-phosphoribosyl)-5-[(5-phosphoribosylamino)methylideneamino] imidazole-4-carboxamide isomerase.